An 855-amino-acid polypeptide reads, in one-letter code: RE1-silencing transcription factor (855 aa).

The C2H2-type 1 zinc-finger motif lies at 141–163; it reads FFCKPCQYQGENEQEFIVHIRTH. The segment at 172–199 is disordered; that stretch reads NGGDSDEDLSADAGPQTSVPNAESAESN. A compositionally biased stretch (polar residues) spans 186 to 199; the sequence is PQTSVPNAESAESN. C2H2-type zinc fingers lie at residues 204–226, 236–258, 264–286, 292–314, 320–343, 349–371, and 377–400; these read IRCE…LKHH, FKCT…LRNH, FTCS…IRTH, FQCI…MRTH, FKCD…RQVH, LSCP…VELH, and FLCP…KSRH. The segment at 458–811 is disordered; it reads NAVVETEKSS…ETPTEERDAS (354 aa). 3 stretches are compositionally biased toward basic and acidic residues: residues 462 to 472, 481 to 496, and 504 to 535; these read ETEKSSKKNMD, NEKK…EKTA, and AVKD…EKAL. The segment covering 548–569 has biased composition (polar residues); sequence SSVQQQSDDCEQTQHTPQQNET. Residues 570-580 show a composition bias toward basic and acidic residues; sequence QENRPEKENRS. Residues 594-604 are compositionally biased toward basic residues; it reads QTKKPCKKQTK. Positions 628–638 are enriched in basic and acidic residues; the sequence is RKAENPAEPKQ. A compositionally biased stretch (basic residues) spans 639-648; it reads RIKRTKKKKD. Residues 652 to 662 show a composition bias toward polar residues; it reads PTTSEANQTNP. Basic and acidic residues-rich tracts occupy residues 711 to 721 and 799 to 811; these read PAVEDVQRPLE and KLPE…RDAS. The C2H2-type 9 zinc-finger motif lies at 818–840; it reads HTCIFCDRSFALEMDYRKHLNRH.

Its subcellular location is the nucleus. The protein resides in the cytoplasm. Functionally, transcriptional repressor which binds neuron-restrictive silencer element (NRSE) and represses neuronal gene transcription in non-neuronal cells. In Danio rerio (Zebrafish), this protein is RE1-silencing transcription factor (rest).